We begin with the raw amino-acid sequence, 215 residues long: 3,4-dihydroxy-2-butanone 4-phosphate synthase (215 aa).

Residues 37–38 (RE), D42, 150–154 (RPGHT), and E174 each bind D-ribulose 5-phosphate. A Mg(2+)-binding site is contributed by E38. H153 is a binding site for Mg(2+).

The protein belongs to the DHBP synthase family. As to quaternary structure, homodimer. The cofactor is Mg(2+). Requires Mn(2+) as cofactor.

It carries out the reaction D-ribulose 5-phosphate = (2S)-2-hydroxy-3-oxobutyl phosphate + formate + H(+). The protein operates within cofactor biosynthesis; riboflavin biosynthesis; 2-hydroxy-3-oxobutyl phosphate from D-ribulose 5-phosphate: step 1/1. In terms of biological role, catalyzes the conversion of D-ribulose 5-phosphate to formate and 3,4-dihydroxy-2-butanone 4-phosphate. The sequence is that of 3,4-dihydroxy-2-butanone 4-phosphate synthase from Buchnera aphidicola subsp. Acyrthosiphon pisum (strain 5A).